The following is a 236-amino-acid chain: Urease accessory protein UreG (236 aa).

The interval 1 to 26 (MHDHSLHSGHDHGLGPGSFHDRGAPH) is disordered. 42-49 (GPVGSGKT) contacts GTP.

This sequence belongs to the SIMIBI class G3E GTPase family. UreG subfamily. In terms of assembly, homodimer. UreD, UreF and UreG form a complex that acts as a GTP-hydrolysis-dependent molecular chaperone, activating the urease apoprotein by helping to assemble the nickel containing metallocenter of UreC. The UreE protein probably delivers the nickel.

Its subcellular location is the cytoplasm. Functionally, facilitates the functional incorporation of the urease nickel metallocenter. This process requires GTP hydrolysis, probably effectuated by UreG. The sequence is that of Urease accessory protein UreG from Anaeromyxobacter sp. (strain Fw109-5).